Reading from the N-terminus, the 346-residue chain is N-acetyl-gamma-glutamyl-phosphate reductase (346 aa).

Cys-149 is an active-site residue.

The protein belongs to the NAGSA dehydrogenase family. Type 1 subfamily.

It localises to the cytoplasm. The enzyme catalyses N-acetyl-L-glutamate 5-semialdehyde + phosphate + NADP(+) = N-acetyl-L-glutamyl 5-phosphate + NADPH + H(+). Its pathway is amino-acid biosynthesis; L-arginine biosynthesis; N(2)-acetyl-L-ornithine from L-glutamate: step 3/4. Functionally, catalyzes the NADPH-dependent reduction of N-acetyl-5-glutamyl phosphate to yield N-acetyl-L-glutamate 5-semialdehyde. This is N-acetyl-gamma-glutamyl-phosphate reductase from Geobacter metallireducens (strain ATCC 53774 / DSM 7210 / GS-15).